The sequence spans 551 residues: MNTRENNLKALHAPRKINLREEAGLLGVDIVTDIGEAQPRNEPVFLGYQRRWFEDESQICIAEKSRRTGLTWAEAGRNVMTAAKPKRRGGRNVFYVGSRQEMALEYIAACALFARAFNQLAKADVWEQTFWDSDKKEEILTYMIRFPNSGFKIQALSSRPSNLRGLQGDVVIDEAAFHEALDELLKAAFALNMWGASVRIISTHNGVDNLFNQYIQDAREGRKDYSVHRITLDDAIADGLYRRICYVTNQPWSPEAEKAWRDGLYRNAPNKESADEEYGCIPKKSGGAYLSRVLIEAAMTPARDIPVLRFEAPDDFESLTPQMRHGIVQDWCEQELLPLLDALSPLNKHVLGEDFARRGDLTVFVPLAITPDLRKRECFRVELRNVTYDQQRQILLFILSRLPRFTGAAFDATGNGGYLAEAARLIYGPEMIDCISLTPAWYQEWMPKLKGEFEAQNITIARHQTTLDDLLHIKVDKGIPQIDKGRTKDEGGKGRRHGDFAVALCMAVRASYMNGFVIDEDSIQALPPRHRGDDVDNDDFDDYHQFERGGW.

It belongs to the T4likevirus large terminase family. In terms of assembly, interacts with the terminase small subunit gp28. Requires Mg(2+) as cofactor.

The protein localises to the host cytoplasm. In terms of biological role, the terminase large subunit acts as an ATP driven molecular motor necessary for viral DNA translocation into empty capsids and as an endonuclease that cuts the viral genome to initiate and to end a packaging reaction. The terminase lies at a unique vertex of the procapsid and is composed of two subunits, a small terminase subunit involved in viral DNA recognition (packaging sequence), and a large terminase subunit possessing endonucleolytic and ATPase activities. Both terminase subunits heterooligomerize and are docked on the portal protein to form the packaging machine. The terminase large subunit exhibits endonuclease activity and cleaves the viral genome concatemer once the capsid is full (headful packaging). Once the capsid is packaged with the DNA, the terminase complex is substituted by neck proteins. The chain is Probable terminase, large subunit gp28 from Escherichia phage Mu (Bacteriophage Mu).